The primary structure comprises 112 residues: Class I hydrophobin 17 (112 aa).

Residues 1–19 (MYSQSMVLLAAAFASFVAA) form the signal peptide. 4 disulfide bridges follow: Cys30–Cys90, Cys37–Cys84, Cys38–Cys74, and Cys91–Cys104. Asn108 carries an N-linked (GlcNAc...) asparagine glycan.

The protein belongs to the fungal hydrophobin family. As to quaternary structure, self-assembles to form functional amyloid fibrils called rodlets. Self-assembly into fibrillar rodlets occurs spontaneously at hydrophobic:hydrophilic interfaces and the rodlets further associate laterally to form amphipathic monolayers.

It is found in the secreted. It localises to the cell wall. Aerial growth, conidiation, and dispersal of filamentous fungi in the environment rely upon a capability of their secreting small amphipathic proteins called hydrophobins (HPBs) with low sequence identity. Class I can self-assemble into an outermost layer of rodlet bundles on aerial cell surfaces, conferring cellular hydrophobicity that supports fungal growth, development and dispersal; whereas Class II form highly ordered films at water-air interfaces through intermolecular interactions but contribute nothing to the rodlet structure. Hydph17 is a class I hydrophobin involved in mycelial growth. This is Class I hydrophobin 17 from Pleurotus ostreatus (strain PC15) (Oyster mushroom).